A 545-amino-acid polypeptide reads, in one-letter code: Chaperonin GroEL (545 aa).

ATP-binding positions include 30 to 33 (TLGP), Lys51, 87 to 91 (DGTTT), Gly415, 483 to 485 (NAA), and Asp499.

It belongs to the chaperonin (HSP60) family. Forms a cylinder of 14 subunits composed of two heptameric rings stacked back-to-back. Interacts with the co-chaperonin GroES.

Its subcellular location is the cytoplasm. The catalysed reaction is ATP + H2O + a folded polypeptide = ADP + phosphate + an unfolded polypeptide.. Together with its co-chaperonin GroES, plays an essential role in assisting protein folding. The GroEL-GroES system forms a nano-cage that allows encapsulation of the non-native substrate proteins and provides a physical environment optimized to promote and accelerate protein folding. This chain is Chaperonin GroEL, found in Aquifex aeolicus (strain VF5).